A 309-amino-acid polypeptide reads, in one-letter code: Small ribosomal subunit protein mS23 (309 aa).

This sequence belongs to the mitochondrion-specific ribosomal protein mS23 family. As to quaternary structure, component of the mitochondrial small ribosomal subunit.

Its subcellular location is the mitochondrion. The chain is Small ribosomal subunit protein mS23 (RSM25) from Lodderomyces elongisporus (strain ATCC 11503 / CBS 2605 / JCM 1781 / NBRC 1676 / NRRL YB-4239) (Yeast).